Here is a 367-residue protein sequence, read N- to C-terminus: UDP-N-acetylenolpyruvoylglucosamine reductase (367 aa).

One can recognise an FAD-binding PCMH-type domain in the interval 29–205 (VGPVAQRVIT…LEVEFKLDAS (177 aa)). R177 is a catalytic residue. S260 (proton donor) is an active-site residue. E359 is an active-site residue.

It belongs to the MurB family. FAD serves as cofactor.

The protein resides in the cytoplasm. It catalyses the reaction UDP-N-acetyl-alpha-D-muramate + NADP(+) = UDP-N-acetyl-3-O-(1-carboxyvinyl)-alpha-D-glucosamine + NADPH + H(+). It functions in the pathway cell wall biogenesis; peptidoglycan biosynthesis. Its function is as follows. Cell wall formation. The sequence is that of UDP-N-acetylenolpyruvoylglucosamine reductase from Mycobacterium leprae (strain Br4923).